The following is a 186-amino-acid chain: Ribosome-recycling factor (186 aa).

This sequence belongs to the RRF family.

The protein resides in the cytoplasm. Functionally, responsible for the release of ribosomes from messenger RNA at the termination of protein biosynthesis. May increase the efficiency of translation by recycling ribosomes from one round of translation to another. This chain is Ribosome-recycling factor, found in Bartonella tribocorum (strain CIP 105476 / IBS 506).